Reading from the N-terminus, the 44-residue chain is Photosystem I reaction center subunit IX (44 aa).

The chain crosses the membrane as a helical span at residues 7–27; it reads YLSVAPVVSTLWFAALAGLLI.

This sequence belongs to the PsaJ family.

The protein resides in the plastid. It is found in the chloroplast thylakoid membrane. Functionally, may help in the organization of the PsaE and PsaF subunits. The protein is Photosystem I reaction center subunit IX of Lotus japonicus (Lotus corniculatus var. japonicus).